A 122-amino-acid polypeptide reads, in one-letter code: Large ribosomal subunit protein uL14 (122 aa).

It belongs to the universal ribosomal protein uL14 family. Part of the 50S ribosomal subunit. Forms a cluster with proteins L3 and L19. In the 70S ribosome, L14 and L19 interact and together make contacts with the 16S rRNA in bridges B5 and B8.

Functionally, binds to 23S rRNA. Forms part of two intersubunit bridges in the 70S ribosome. This Halalkalibacterium halodurans (strain ATCC BAA-125 / DSM 18197 / FERM 7344 / JCM 9153 / C-125) (Bacillus halodurans) protein is Large ribosomal subunit protein uL14.